Consider the following 209-residue polypeptide: Large ribosomal subunit protein uL3 (209 aa).

A disordered region spans residues 141–163; the sequence is RAVGSMGASSDPSRTFKNKRMPG.

The protein belongs to the universal ribosomal protein uL3 family. Part of the 50S ribosomal subunit. Forms a cluster with proteins L14 and L19.

One of the primary rRNA binding proteins, it binds directly near the 3'-end of the 23S rRNA, where it nucleates assembly of the 50S subunit. The sequence is that of Large ribosomal subunit protein uL3 from Clostridium botulinum (strain ATCC 19397 / Type A).